Consider the following 67-residue polypeptide: Medusin-PT (67 aa).

The signal sequence occupies residues 1–22; that stretch reads MAFLKKSLFLVFFLGFVSLSIC. Residues 23–48 constitute a propeptide that is removed on maturation; it reads EEEKRETDEKENEQEDDREERSEEKR. A disordered region spans residues 25–46; that stretch reads EKRETDEKENEQEDDREERSEE. The span at 31–40 shows a compositional bias: acidic residues; that stretch reads EKENEQEDDR. Leu66 is subject to Leucine amide.

This sequence belongs to the frog skin active peptide (FSAP) family. Medusin subfamily. Post-translationally, in the synthetic mutant medusin-PT1a [T58K], the Leu-50 has been modified in a D-amino acid. In medusin-PT1a, there is an increase in antimicrobial activity, and an increase in hemolytic activity. It is more potent against S.aureus and gains activity against MRSA, E.faecalis, E.coli, P.aeruginosa and C.albicans. There is an important increase in both biofilm inhibition and biofilm eradication. Expressed by the skin glands.

It localises to the secreted. The protein resides in the target cell membrane. Its function is as follows. Antimicrobial peptide with activity against Gram-positive bacteria S.epidermidis ATCC 12228 (MIC=50 uM) and S.aureus (MIC=64 ug/ml and MBC=128 ug/ml). Not active against some Gram-positive bacteria (methicillin-resistant S.aureus (MRSA), E.faecalis), Gram-negative bacterium E.coli ATCC 25922 and fungus C.albicans at concentrations up to 100 uM. Can only slightly inhibit the formation of biofilm by S.aureus (minimal biofilm inhibitionconcentration MBIC=512 ug/ml, minimal biofilm eradication concentration MBEC&gt;512 ug/ml). Has an anti-inflammatory effect, since it inhibits the production of the pro-inflammatory cytokines TNF-alpha and IL-1beta. Has high activity of stimulation of insulin release, which may protect the species from being eaten by predators by causing fatal hypoglycemia. Is not cytotoxic to cancer line cells. Shows very low hemolysis on horse erythrocytes and moderate hemolysis on mouse erythrocytes. This chain is Medusin-PT, found in Phyllomedusa tarsius (Brownbelly leaf frog).